The primary structure comprises 221 residues: Transcription repressor OFP8 (221 aa).

A compositionally biased stretch (acidic residues) spans 124-138 (EDEGDKEESEDDDSD). Residues 124-147 (EDEGDKEESEDDDSDTLFSSRSFS) are disordered. One can recognise an OVATE domain in the interval 158–217 (VVKKSKDPYEDFRTSMVEMIVERQIFAPAELQQLLQCFLSLNSRQHHKVIVQVFLEIYAT).

As to expression, expressed in roots, rosette and cauline leaves, shoots, stems, flower buds and siliques.

It localises to the nucleus. Functionally, transcriptional repressor that regulates multiple aspects of plant growth and development through the regulation of BEL1-LIKE (BLH) and KNOX TALE (KNAT) homeodomain transcription factors. The chain is Transcription repressor OFP8 (OFP8) from Arabidopsis thaliana (Mouse-ear cress).